The following is a 512-amino-acid chain: 2-isopropylmalate synthase (512 aa).

Positions 5–268 (LIIFDTTLRD…DIGIDTQQIL (264 aa)) constitute a Pyruvate carboxyltransferase domain. Mn(2+)-binding residues include aspartate 14, histidine 202, histidine 204, and asparagine 239. Positions 394-512 (GFVSLSQHSE…SKADRVAAQG (119 aa)) are regulatory domain.

The protein belongs to the alpha-IPM synthase/homocitrate synthase family. LeuA type 1 subfamily. As to quaternary structure, homodimer. Requires Mn(2+) as cofactor.

The protein localises to the cytoplasm. It catalyses the reaction 3-methyl-2-oxobutanoate + acetyl-CoA + H2O = (2S)-2-isopropylmalate + CoA + H(+). Its pathway is amino-acid biosynthesis; L-leucine biosynthesis; L-leucine from 3-methyl-2-oxobutanoate: step 1/4. In terms of biological role, catalyzes the condensation of the acetyl group of acetyl-CoA with 3-methyl-2-oxobutanoate (2-ketoisovalerate) to form 3-carboxy-3-hydroxy-4-methylpentanoate (2-isopropylmalate). In Polaromonas naphthalenivorans (strain CJ2), this protein is 2-isopropylmalate synthase.